Reading from the N-terminus, the 663-residue chain is Oligopeptide-binding protein SarA (663 aa).

The signal sequence occupies residues 1 to 22 (MKKGKILALAGVALLATGVLAA). The N-palmitoyl cysteine moiety is linked to residue Cys23. Cys23 carries S-diacylglycerol cysteine lipidation. Residues 637 to 663 (QKAQEKWNKERAESNKKAQEELEKHVK) form a disordered region.

It belongs to the bacterial solute-binding protein 5 family.

It localises to the cell membrane. May be involved in the expression of cell surface properties important for colonization of the human oral cavity. It may also be involved in uptake processes. In Streptococcus gordonii (strain Challis / ATCC 35105 / BCRC 15272 / CH1 / DL1 / V288), this protein is Oligopeptide-binding protein SarA (sarA).